The sequence spans 655 residues: Methyl-accepting chemotaxis protein McpC (655 aa).

Topologically, residues 1–8 (MFKKLHMK) are cytoplasmic. The helical transmembrane segment at 9-29 (IAVFVSIMLIITVVLLMLSSY) threads the bilayer. Over 30 to 276 (LTLKPMITED…LMWISDKMNR (247 aa)) the chain is Extracellular. The 78-residue stretch at 148 to 225 (WTEPYKDVVT…SNQGKNISKD (78 aa)) folds into the Cache domain. A helical membrane pass occupies residues 277-297 (ANLWISLIALIITIILSYFLA). Residues 298–350 (KTITGPIQQLIVKTKAVSAGDLTVRAESKSKDEVGILTRDFNLMVENMKEMVE) form the HAMP domain. The Cytoplasmic segment spans residues 298-655 (KTITGPIQQL…LMNTIAKFTL (358 aa)). In terms of domain architecture, Methyl-accepting transducer spans 369 to 619 (VAAETNETSG…ESAAAAEEVN (251 aa)).

The protein belongs to the methyl-accepting chemotaxis (MCP) protein family. In terms of assembly, interacts with FloT. Post-translationally, some glutamine residues are deamidated to glutamate by CheD and subsequently methylated.

It localises to the cell membrane. Its subcellular location is the membrane raft. Chemotactic-signal transducers respond to changes in the concentration of attractants and repellents in the environment, transduce a signal from the outside to the inside of the cell, and facilitate sensory adaptation through the variation of the level of methylation. All amino acids serve as attractants in B.subtilis, they appear to cause an increase in the turnover methyl groups, leading to methylation of an unidentified acceptor, while repellents have been shown to cause a decrease in methyl group turnover. The methyl groups are added by a methyltransferase and removed by a methylesterase. McpC is required for taxis to cysteine, proline, threonine, glycine, serine, lysine, valine and arginine and for aspartate, glutamine, histidine and glutamate. Primarily mediates response to positive stimulus of PTS carbohydrates. Greatly influences the duration or magnitude of the response to negative PTS carbohydrate stimulus. In Bacillus subtilis (strain 168), this protein is Methyl-accepting chemotaxis protein McpC (mcpC).